Here is a 649-residue protein sequence, read N- to C-terminus: Putative cystathionine gamma-synthase YML082W (649 aa).

A disordered region spans residues 242–273; it reads NEANHGEDHDGGISGEVDSQEEPHNGLVSTIP. Ser-287 bears the Phosphoserine mark. Residue Lys-451 is modified to N6-(pyridoxal phosphate)lysine.

The protein belongs to the trans-sulfuration enzymes family. MET7 subfamily. Pyridoxal 5'-phosphate serves as cofactor.

The catalysed reaction is O-succinyl-L-homoserine + L-cysteine = L,L-cystathionine + succinate + H(+). It participates in amino-acid biosynthesis; L-methionine biosynthesis via de novo pathway; L-cystathionine from O-succinyl-L-homoserine: step 1/1. Catalyzes the formation of L-cystathionine from O-succinyl-L-homoserine (OSHS) and L-cysteine, via a gamma-replacement reaction. In the absence of thiol, catalyzes gamma-elimination to form 2-oxobutanoate, succinate and ammonia. The protein is Putative cystathionine gamma-synthase YML082W of Saccharomyces cerevisiae (strain ATCC 204508 / S288c) (Baker's yeast).